Here is a 416-residue protein sequence, read N- to C-terminus: UDP-N-acetylglucosamine 1-carboxyvinyltransferase (416 aa).

22-23 (KN) is a binding site for phosphoenolpyruvate. Arginine 92 lines the UDP-N-acetyl-alpha-D-glucosamine pocket. Residue cysteine 116 is the Proton donor of the active site. Cysteine 116 carries the post-translational modification 2-(S-cysteinyl)pyruvic acid O-phosphothioketal. UDP-N-acetyl-alpha-D-glucosamine is bound by residues 121 to 125 (RPVDQ), aspartate 304, and isoleucine 326.

The protein belongs to the EPSP synthase family. MurA subfamily.

It is found in the cytoplasm. The enzyme catalyses phosphoenolpyruvate + UDP-N-acetyl-alpha-D-glucosamine = UDP-N-acetyl-3-O-(1-carboxyvinyl)-alpha-D-glucosamine + phosphate. Its pathway is cell wall biogenesis; peptidoglycan biosynthesis. Cell wall formation. Adds enolpyruvyl to UDP-N-acetylglucosamine. This chain is UDP-N-acetylglucosamine 1-carboxyvinyltransferase, found in Cupriavidus taiwanensis (strain DSM 17343 / BCRC 17206 / CCUG 44338 / CIP 107171 / LMG 19424 / R1) (Ralstonia taiwanensis (strain LMG 19424)).